The sequence spans 158 residues: Large ribosomal subunit protein uL23 (158 aa).

A disordered region spans residues 1–43 (MPPKSSTKAEPKASSAKTQVAKAKSAKKAVVKGTSSKTQRRIR). A compositionally biased stretch (low complexity) spans 12-23 (KASSAKTQVAKA).

Belongs to the universal ribosomal protein uL23 family.

Its function is as follows. This protein binds to a specific region on the 26S rRNA. The protein is Large ribosomal subunit protein uL23 of Puccinia graminis (Black stem rust fungus).